Reading from the N-terminus, the 292-residue chain is Glutamate racemase (292 aa).

Substrate-binding positions include Asp28–Ser29 and Tyr60–Gly61. Catalysis depends on Cys91, which acts as the Proton donor/acceptor. Residue Asn92–Thr93 participates in substrate binding. The Proton donor/acceptor role is filled by Cys200. Thr201 to His202 provides a ligand contact to substrate.

This sequence belongs to the aspartate/glutamate racemases family.

The enzyme catalyses L-glutamate = D-glutamate. Its pathway is cell wall biogenesis; peptidoglycan biosynthesis. Provides the (R)-glutamate required for cell wall biosynthesis. The protein is Glutamate racemase of Trichormus variabilis (strain ATCC 29413 / PCC 7937) (Anabaena variabilis).